The chain runs to 396 residues: MESVMSKYENQILIFPDYLEEFPDTDELVWILGKQHPLKTEKSKLLSDISARLWFTYRRKFSPIGGTGPSSDAGWGCMLRCGQMMLAQALICRHLGRDWNWERQKEQPKEYQRILQCFLDRKDCCYSIHQMAQMGVGEGKSIGEWFGPNTVAQVIKKLALFDEWNSLAVYVSMDNTVVIEDIKKMCCVLPVGAADPAGDFLTASNQSRDTSVPCSAWKPLLLIVPLRLGINQINPVYVEAFKECFKMPQSLGALGGKPNNAYYFIGFLGDELIFLDPHTTQTFVDIEESGLVDDQTFHCLQSPQRMSILNLDPSVALGFFCKEEKDFDNWCSLVQKEILKENLRMFELVQKHPSHWPPFVPPAKPEVTTTGAEFIESTEQLEDFELEEDFEILSVG.

Cys77 serves as the catalytic Nucleophile. Catalysis depends on residues Asp276 and His278. Positions 390 to 393 (FEIL) match the LIR motif.

This sequence belongs to the peptidase C54 family. Interacts with ATG9A; the interaction is direct.

Its subcellular location is the cytoplasm. The catalysed reaction is [protein]-C-terminal L-amino acid-glycyl-phosphatidylethanolamide + H2O = [protein]-C-terminal L-amino acid-glycine + a 1,2-diacyl-sn-glycero-3-phosphoethanolamine. With respect to regulation, inhibited by N-ethylmaleimide. Redox-regulated during autophagy since reducing conditions activate ATG4A whereas an oxidizing environment such as the presence of H(2)O(2) inhibits its activity. In terms of biological role, cysteine protease that plays a key role in autophagy by mediating both proteolytic activation and delipidation of ATG8 family proteins. The protease activity is required for proteolytic activation of ATG8 family proteins: cleaves the C-terminal amino acid of ATG8 proteins to reveal a C-terminal glycine. Exposure of the glycine at the C-terminus is essential for ATG8 proteins conjugation to phosphatidylethanolamine (PE) and insertion to membranes, which is necessary for autophagy. Preferred substrate is GABARAPL2 followed by MAP1LC3A and GABARAP. Protease activity is also required to counteract formation of high-molecular weight conjugates of ATG8 proteins (ATG8ylation): acts as a deubiquitinating-like enzyme that removes ATG8 conjugated to other proteins, such as ATG3. In addition to the protease activity, also mediates delipidation of ATG8 family proteins. Catalyzes delipidation of PE-conjugated forms of ATG8 proteins during macroautophagy. Compared to ATG4B, the major protein for proteolytic activation of ATG8 proteins, shows weaker ability to cleave the C-terminal amino acid of ATG8 proteins, while it displays stronger delipidation activity. Involved in phagophore growth during mitophagy independently of its protease activity and of ATG8 proteins: acts by regulating ATG9A trafficking to mitochondria and promoting phagophore-endoplasmic reticulum contacts during the lipid transfer phase of mitophagy. The chain is Cysteine protease ATG4A from Mus musculus (Mouse).